The chain runs to 141 residues: Hemoglobin subunit alpha-2 (141 aa).

The Globin domain occupies 1-141 (VLTDAERKEV…VATVLTSKYR (141 aa)). Residue histidine 58 coordinates O2. Heme b is bound at residue histidine 87.

Belongs to the globin family. Heterotetramer of two alpha chains and two beta chains. As to expression, red blood cells.

Its function is as follows. Involved in oxygen transport from the lung to the various peripheral tissues. This Tachyglossus aculeatus aculeatus (Southeast Australian short-beaked echidna) protein is Hemoglobin subunit alpha-2.